The primary structure comprises 767 residues: General transcription and DNA repair factor IIH helicase/translocase subunit XPB1 (767 aa).

The disordered stretch occupies residues 1–51 (MGNGERGRPNKKMKYGGKDDQKMKNIQNAEDYYDDADEDSRDGEGEEKKRD). Acidic residues predominate over residues 31-41 (DYYDDADEDSR). A compositionally biased stretch (basic and acidic residues) spans 42–51 (DGEGEEKKRD). A Helicase ATP-binding domain is found at 293 to 455 (MFGNGRARSG…DLNFLIGPKL (163 aa)). 306-313 (LPCGAGKS) provides a ligand contact to ATP. The short motif at 408 to 411 (DEVH) is the DEVH box element. In terms of domain architecture, Helicase C-terminal spans 510-676 (RACEFLIRFH…SLPPPDAGSS (167 aa)). The disordered stretch occupies residues 742-767 (RHKSGQQFKKPKDPTKRHNLFKKRYV). The Nuclear localization signal signature appears at 750-766 (KKPKDPTKRHNLFKKRY). The span at 758 to 767 (RHNLFKKRYV) shows a compositional bias: basic residues.

This sequence belongs to the helicase family. RAD25/XPB subfamily. As to quaternary structure, component of the 7-subunit TFIIH core complex composed of XPB, XPD, TFB1/GTF2H1, GTF2H2/P44, TFB4/GTF2H3, TFB2/GTF2H4 and TFB5/GTF2H5, which is active in NER. The core complex associates with the 3-subunit CDK-activating kinase (CAK) module composed of CYCH1/cyclin H1, CDKD and MAT1/At4g30820 to form the 10-subunit holoenzyme (holo-TFIIH) active in transcription. As to expression, expressed ubiquitously.

The protein resides in the nucleus. The catalysed reaction is Couples ATP hydrolysis with the unwinding of duplex DNA by translocating in the 3'-5' direction.. It catalyses the reaction ATP + H2O = ADP + phosphate + H(+). Its function is as follows. ATP-dependent 3'-5' DNA helicase/translocase; binds dsDNA rather than ssDNA, unzipping it in a translocase rather than classical helicase activity. Component of the general transcription and DNA repair factor IIH (TFIIH) core complex. When complexed to CDK-activating kinase (CAK), involved in RNA transcription by RNA polymerase II. The ATPase activity of XPB/ERCC3, but not its helicase activity, is required for DNA opening; it may wrap around the damaged DNA wedging it open, causing localized melting and twisting that allows XPD/ERCC2 helicase to anchor. The ATP-dependent helicase activity of XPB/ERCC3 may be required for promoter escape. Also involved in transcription-coupled nucleotide excision repair (NER) of damaged DNA. In NER, TFIIH acts by opening DNA around the lesion to allow the excision of the damaged oligonucleotide and its replacement by a new DNA fragment. The structure of the TFIIH transcription complex differs from the NER-TFIIH complex. Partially complements UV sensitivity of a yeast SSL2 mutation. Required during the early stages of development, including seed germination. The protein is General transcription and DNA repair factor IIH helicase/translocase subunit XPB1 (XPB1) of Arabidopsis thaliana (Mouse-ear cress).